A 283-amino-acid chain; its full sequence is 4-hydroxy-3-methylbut-2-enyl diphosphate reductase (283 aa).

Cys-12 provides a ligand contact to [4Fe-4S] cluster. Residues His-40 and His-73 each contribute to the (2E)-4-hydroxy-3-methylbut-2-enyl diphosphate site. Dimethylallyl diphosphate contacts are provided by His-40 and His-73. Positions 40 and 73 each coordinate isopentenyl diphosphate. Cys-95 lines the [4Fe-4S] cluster pocket. His-123 lines the (2E)-4-hydroxy-3-methylbut-2-enyl diphosphate pocket. Residue His-123 participates in dimethylallyl diphosphate binding. Position 123 (His-123) interacts with isopentenyl diphosphate. Residue Glu-125 is the Proton donor of the active site. (2E)-4-hydroxy-3-methylbut-2-enyl diphosphate is bound at residue Thr-161. Cys-189 is a [4Fe-4S] cluster binding site. 3 residues coordinate (2E)-4-hydroxy-3-methylbut-2-enyl diphosphate: Ser-217, Asn-219, and Ser-261. Dimethylallyl diphosphate contacts are provided by Ser-217, Asn-219, and Ser-261. Isopentenyl diphosphate contacts are provided by Ser-217, Asn-219, and Ser-261.

Belongs to the IspH family. [4Fe-4S] cluster is required as a cofactor.

The catalysed reaction is isopentenyl diphosphate + 2 oxidized [2Fe-2S]-[ferredoxin] + H2O = (2E)-4-hydroxy-3-methylbut-2-enyl diphosphate + 2 reduced [2Fe-2S]-[ferredoxin] + 2 H(+). The enzyme catalyses dimethylallyl diphosphate + 2 oxidized [2Fe-2S]-[ferredoxin] + H2O = (2E)-4-hydroxy-3-methylbut-2-enyl diphosphate + 2 reduced [2Fe-2S]-[ferredoxin] + 2 H(+). The protein operates within isoprenoid biosynthesis; dimethylallyl diphosphate biosynthesis; dimethylallyl diphosphate from (2E)-4-hydroxy-3-methylbutenyl diphosphate: step 1/1. Its pathway is isoprenoid biosynthesis; isopentenyl diphosphate biosynthesis via DXP pathway; isopentenyl diphosphate from 1-deoxy-D-xylulose 5-phosphate: step 6/6. Catalyzes the conversion of 1-hydroxy-2-methyl-2-(E)-butenyl 4-diphosphate (HMBPP) into a mixture of isopentenyl diphosphate (IPP) and dimethylallyl diphosphate (DMAPP). Acts in the terminal step of the DOXP/MEP pathway for isoprenoid precursor biosynthesis. The chain is 4-hydroxy-3-methylbut-2-enyl diphosphate reductase from Geobacter sp. (strain M21).